The following is a 302-amino-acid chain: Orotidine 5'-phosphate decarboxylase (302 aa).

K105 serves as the catalytic Proton donor.

It belongs to the OMP decarboxylase family. Type 2 subfamily.

It catalyses the reaction orotidine 5'-phosphate + H(+) = UMP + CO2. Its pathway is pyrimidine metabolism; UMP biosynthesis via de novo pathway; UMP from orotate: step 2/2. This Rhodopirellula baltica (strain DSM 10527 / NCIMB 13988 / SH1) protein is Orotidine 5'-phosphate decarboxylase.